The chain runs to 253 residues: Tryptophan synthase alpha chain (253 aa).

Active-site proton acceptor residues include Glu47 and Asp58.

Belongs to the TrpA family. Tetramer of two alpha and two beta chains.

It carries out the reaction (1S,2R)-1-C-(indol-3-yl)glycerol 3-phosphate + L-serine = D-glyceraldehyde 3-phosphate + L-tryptophan + H2O. It functions in the pathway amino-acid biosynthesis; L-tryptophan biosynthesis; L-tryptophan from chorismate: step 5/5. In terms of biological role, the alpha subunit is responsible for the aldol cleavage of indoleglycerol phosphate to indole and glyceraldehyde 3-phosphate. This chain is Tryptophan synthase alpha chain, found in Lactococcus lactis subsp. lactis (strain IL1403) (Streptococcus lactis).